We begin with the raw amino-acid sequence, 187 residues long: Putative lipoprotein LppJ (187 aa).

An N-terminal signal peptide occupies residues M1–G28. C29 carries N-palmitoyl cysteine lipidation. Residue C29 is the site of S-diacylglycerol cysteine attachment.

It localises to the cell membrane. The protein is Putative lipoprotein LppJ (lppJ) of Mycobacterium bovis (strain ATCC BAA-935 / AF2122/97).